Here is a 200-residue protein sequence, read N- to C-terminus: 3-isopropylmalate dehydratase small subunit (200 aa).

The protein belongs to the LeuD family. LeuD type 1 subfamily. In terms of assembly, heterodimer of LeuC and LeuD.

It carries out the reaction (2R,3S)-3-isopropylmalate = (2S)-2-isopropylmalate. It participates in amino-acid biosynthesis; L-leucine biosynthesis; L-leucine from 3-methyl-2-oxobutanoate: step 2/4. In terms of biological role, catalyzes the isomerization between 2-isopropylmalate and 3-isopropylmalate, via the formation of 2-isopropylmaleate. This chain is 3-isopropylmalate dehydratase small subunit, found in Haemophilus influenzae (strain 86-028NP).